The following is an 833-amino-acid chain: MRLENKDIRLASAVLEVELHQTSALSVPTCPDPGRLLTVKPATSNYKLGQADPCIPYAGEAAGKSVCVPEHTEFGSFLVKGSSSLKDLSFKEDTPLLWNSSQKKRSQLMPVHHPEFIATEGSWENGLTAWEQKCMLGKEVADLSALASSEKRDLAGSVHLRAQVSKLGCCVRWIKITGLFVFVVLCSILFSLYPDQGKFWQLLAVSPLENYSVNLSGHADSMILQLDLAGALMAGGPSGSGKEEHVVVVVTQTDAAGNRRRRPQQLTYNWTVLLNPRSEHVVVSRTFEIVSREAVSISIQASLQQTRLVPLLLAHQFLGASVEAQVASAVAILAGVYTLIIFEIVHRTLAAMLGALAALAALAVVGDRPSLTHVVEWIDFETLALLFGMMILVAVFSETGFFDYCAVKAYQLSRGRVWAMIFMLCLMAAILSAFLDNVTTMLLFTPVTIRLCEVLNLDPRQVLIAEVIFTNIGGAATAIGDPPNVIIVSNQELRKMGLDFAGFTAHMFLGICLVLLVSFPLLRLLYWNKKLYNKEPSEIVELKHEIHVWRLTAQRISPASREETAVRGLLLEKVLALEHLLAQRLHTFHRQISQEDKNWETNIQELQRKHRISDRSLLVKCLTVLGFVISMFFLNSFVPGIHLDLGWIAILGAIWLLILADIHDFEIILHRVEWATLLFFAALFVLMEALTHLHLVEYVGEQTALLIKMVPEDQRFAAAIVLIVWVSALASSLIDNIPFTATMIPVLLNLSQDPEISLPALPLMYALALGACLGGNGTLIGASTNVVCAGIAEKHGYGFSFMEFFRLGFPVMLMSCTIGMCYLLIAHIVVGWN.

The Cytoplasmic portion of the chain corresponds to 1–172; the sequence is MRLENKDIRL…QVSKLGCCVR (172 aa). Residues 173-193 form a helical membrane-spanning segment; it reads WIKITGLFVFVVLCSILFSLY. Residues 194–325 are Extracellular-facing; that stretch reads PDQGKFWQLL…QFLGASVEAQ (132 aa). Asn-210, Asn-214, and Asn-269 each carry an N-linked (GlcNAc...) asparagine glycan. A helical transmembrane segment spans residues 326 to 346; the sequence is VASAVAILAGVYTLIIFEIVH. The Cytoplasmic segment spans residues 347–348; sequence RT. Residues 349–369 form a helical membrane-spanning segment; sequence LAAMLGALAALAALAVVGDRP. At 370–381 the chain is on the extracellular side; that stretch reads SLTHVVEWIDFE. Residues 382-402 form a helical membrane-spanning segment; the sequence is TLALLFGMMILVAVFSETGFF. Over 403 to 417 the chain is Cytoplasmic; sequence DYCAVKAYQLSRGRV. The helical transmembrane segment at 418-438 threads the bilayer; it reads WAMIFMLCLMAAILSAFLDNV. The Extracellular portion of the chain corresponds to 439–501; the sequence is TTMLLFTPVT…ELRKMGLDFA (63 aa). Residues 502–522 traverse the membrane as a helical segment; the sequence is GFTAHMFLGICLVLLVSFPLL. Residues 523–617 lie on the Cytoplasmic side of the membrane; it reads RLLYWNKKLY…RKHRISDRSL (95 aa). The helical transmembrane segment at 618–638 threads the bilayer; the sequence is LVKCLTVLGFVISMFFLNSFV. A topological domain (extracellular) is located at residue Pro-639. A helical membrane pass occupies residues 640–660; sequence GIHLDLGWIAILGAIWLLILA. Over 661-675 the chain is Cytoplasmic; that stretch reads DIHDFEIILHRVEWA. The chain crosses the membrane as a helical span at residues 676 to 696; sequence TLLFFAALFVLMEALTHLHLV. The Extracellular portion of the chain corresponds to 697-718; the sequence is EYVGEQTALLIKMVPEDQRFAA. The chain crosses the membrane as a helical span at residues 719–739; that stretch reads AIVLIVWVSALASSLIDNIPF. The Cytoplasmic portion of the chain corresponds to 740–759; that stretch reads TATMIPVLLNLSQDPEISLP. A helical transmembrane segment spans residues 760 to 780; sequence ALPLMYALALGACLGGNGTLI. At 781 to 810 the chain is on the extracellular side; sequence GASTNVVCAGIAEKHGYGFSFMEFFRLGFP. A helical transmembrane segment spans residues 811–831; sequence VMLMSCTIGMCYLLIAHIVVG. Over 832–833 the chain is Cytoplasmic; sequence WN.

The protein belongs to the CitM (TC 2.A.11) transporter family. As to expression, most abundant in melanocytes. Also present in neonatal and adult eye tissue presumably as a result of expression in the retinal pigmented epithelium and choroid body, known sites of melanogenesis in the eye. Small but detectable amounts also observed in fetal, neonatal and adult brain. Moderate amounts detected in adult testis and ovary. Not detected in heart, kidney, spleen, liver or thymus.

The protein resides in the melanosome membrane. It catalyses the reaction chloride(in) = chloride(out). In terms of biological role, contributes to a melanosome-specific anion (chloride) current that modulates melanosomal pH for optimal tyrosinase activity required for melanogenesis and the melanosome maturation. One of the components of the mammalian pigmentary system. May serve as a key control point at which color variation is determined. Major determinant of eye color. Seems to regulate the post-translational processing of tyrosinase, which catalyzes the limiting reaction in melanin synthesis. The chain is P protein (Oca2) from Mus musculus (Mouse).